Here is a 256-residue protein sequence, read N- to C-terminus: Undecaprenyl-diphosphatase (256 aa).

7 helical membrane passes run Pro39–Val59, Arg77–Phe97, Phe101–Met121, Ile135–Val155, Leu176–Leu196, Leu206–Leu226, and Val233–Pro253.

The protein belongs to the UppP family.

It is found in the cell membrane. It catalyses the reaction di-trans,octa-cis-undecaprenyl diphosphate + H2O = di-trans,octa-cis-undecaprenyl phosphate + phosphate + H(+). Functionally, catalyzes the dephosphorylation of undecaprenyl diphosphate (UPP). In Methanothrix thermoacetophila (strain DSM 6194 / JCM 14653 / NBRC 101360 / PT) (Methanosaeta thermophila), this protein is Undecaprenyl-diphosphatase.